The following is a 167-amino-acid chain: Translationally-controlled tumor protein homolog (167 aa).

In terms of domain architecture, TCTP spans 1–167 (MIIYTDIISG…WKHGVKAEKI (167 aa)).

Belongs to the TCTP family.

Its subcellular location is the cytoplasm. The protein localises to the cytoskeleton. Its function is as follows. Involved in protein synthesis. Involved in microtubule stabilization. This chain is Translationally-controlled tumor protein homolog, found in Kluyveromyces lactis (strain ATCC 8585 / CBS 2359 / DSM 70799 / NBRC 1267 / NRRL Y-1140 / WM37) (Yeast).